Consider the following 566-residue polypeptide: Rho GTPase-activating protein gacH (566 aa).

Disordered stretches follow at residues 1 to 56 (MSGV…SGAT), 65 to 84 (LLKQ…NNNK), 128 to 168 (SEDE…SAHS), and 322 to 366 (KPQV…NSKN). The segment covering 14–35 (SSTTATTTGSSKSSLNISKSVS) has biased composition (low complexity). The segment covering 36 to 56 (PTGNKAVSPMSSPNSLQSGAT) has biased composition (polar residues). Residues 65 to 83 (LLKQQQQPNHSITTNNNNN) show a composition bias toward low complexity. Over residues 130–141 (DEYEDDEDEDEN) the composition is skewed to acidic residues. Over residues 142-160 (NNSVNNNSNNNSNNNNNNN) the composition is skewed to low complexity. Positions 327 to 337 (KSPQSSGSLST) are enriched in polar residues. The segment covering 345 to 356 (SSSLQRSRSVSQ) has biased composition (low complexity). The 196-residue stretch at 369 to 564 (GSLDTILEKE…LLIENYNLFY (196 aa)) folds into the Rho-GAP domain.

It is found in the cytoplasm. In terms of biological role, rho GTPase-activating protein involved in the signal transduction pathway. In Dictyostelium discoideum (Social amoeba), this protein is Rho GTPase-activating protein gacH (gacH).